Consider the following 795-residue polypeptide: Histone acetyltransferase KAT2A (795 aa).

Residues 1–18 (MADPAAQSSAQPRLQQAQ) are compositionally biased toward polar residues. The segment at 1-55 (MADPAAQSSAQPRLQQAQSSGPTGSNSNPGAGSSDPARPGLSQQQWSSQKKAQVR) is disordered. Residues 19-34 (SSGPTGSNSNPGAGSS) show a composition bias toward low complexity. An N-acetyltransferase domain is found at 461–614 (VIGNSLSQKS…GATLMECELN (154 aa)). The Proton donor/acceptor role is filled by E533. Acetyl-CoA-binding positions include 537–539 (CAV), 544–550 (QVKGYGT), and Y575. Residues 537–539 (CAV), 544–550 (QVKGYGT), and Y575 each bind succinyl-CoA. The tract at residues 597 to 606 (LGYIKDYEGA) is loop 3. Positions 686–790 (KDPDLLYNML…KFFYFKLKEA (105 aa)) constitute a Bromo domain.

It belongs to the acetyltransferase family. GCN5 subfamily.

The protein resides in the nucleus. It is found in the chromosome. Its subcellular location is the cytoplasm. The protein localises to the cytoskeleton. It localises to the microtubule organizing center. The protein resides in the centrosome. It carries out the reaction L-lysyl-[histone] + acetyl-CoA = N(6)-acetyl-L-lysyl-[histone] + CoA + H(+). It catalyses the reaction L-lysyl-[protein] + acetyl-CoA = N(6)-acetyl-L-lysyl-[protein] + CoA + H(+). The enzyme catalyses succinyl-CoA + L-lysyl-[protein] = N(6)-succinyl-L-lysyl-[protein] + CoA + H(+). The catalysed reaction is glutaryl-CoA + L-lysyl-[protein] = N(6)-glutaryl-L-lysyl-[protein] + CoA + H(+). Functionally, protein lysine acyltransferase that can act as a acetyltransferase, glutaryltransferasesucc, succinyltransferase or malonyltransferase, depending on the context. Acts as a histone lysine succinyltransferase: catalyzes succinylation of histone H3 on 'Lys-79' (H3K79succ), with a maximum frequency around the transcription start sites of genes. Succinylation of histones gives a specific tag for epigenetic transcription activation. Association with the 2-oxoglutarate dehydrogenase complex, which provides succinyl-CoA, is required for histone succinylation. In different complexes, functions either as an acetyltransferase (HAT) or as a succinyltransferase: in the SAGA and ATAC complexes, acts as a histone acetyltransferase. Has significant histone acetyltransferase activity with core histones, but not with nucleosome core particles. Has a a strong preference for acetylation of H3 at 'Lys-9' (H3K9ac). Acetylation of histones gives a specific tag for epigenetic transcription activation. Also acetylates non-histone proteins, such as tbx5. Involved in heart and limb development by mediating acetylation of tbx5. Together with kat2b, required for growth and differentiation of craniofacial cartilage and bone by regulating acetylation of histone H3 at 'Lys-9' (H3K9ac). Also acts as a histone glutaryltransferase: catalyzes glutarylation of histone H4 on 'Lys-91' (H4K91glu), a mark that destabilizes nucleosomes by promoting dissociation of the H2A-H2B dimers from nucleosomes. The protein is Histone acetyltransferase KAT2A of Danio rerio (Zebrafish).